We begin with the raw amino-acid sequence, 504 residues long: MSVGTVLLTALLALVGYLLMKWRSTMRHWQDLGIPCEEPHILMGSMKGVRTARSFNEIWTSYYNKFRGSGPFAGFYWFRRPAVFVLETSLAKQILIKEFNKFTDRGFFHNPEDDPLSGQLFLLDGQKWRTMRNKLSSTFTSGKMKYMFPTVVKVANEFTDVFGQNVAKSPVVEVRELLARFTTDVIGTCAFGIECSSLKDPDAEFREMGRRSLTEQRLGPVGIGFVNSFPNLARRLHMKMTAEPIERFFMRIVRETVAFREQNNIRRNDFMDQLIDLKNKPLMVSQSGESVNLTIEEIAAQAFVFFAAGFETSSTTMGFALYELAQNQDIQNRVRKECQEVIEKCNGELNYESMKDLVYLDQVVSETLRLYTVLPVLNRECLEDYEVPGHPKYVIKKGMPVLIPCGAMHRDEKLYANPNTFNPDNFSPERVKERDSVEWLPFGDGPRNCIGMRFGQMQARIGLALLIKDFKFSVCEKTTIPMTYNKEMFLIASNSGIYLKAERV.

Cys-449 serves as a coordination point for heme.

It belongs to the cytochrome P450 family. It depends on heme as a cofactor.

It localises to the endoplasmic reticulum membrane. Its subcellular location is the microsome membrane. Its function is as follows. May be involved in the metabolism of insect hormones and in the breakdown of synthetic insecticides. This is Probable cytochrome P450 6a21 (Cyp6a21) from Drosophila melanogaster (Fruit fly).